The sequence spans 310 residues: 4-hydroxyproline 2-epimerase (310 aa).

C88 (proton acceptor) is an active-site residue. Substrate contacts are provided by residues 89-90 (GH), H208, and D232. The Proton donor role is filled by C236. Residue 237–238 (GT) participates in substrate binding.

The protein belongs to the proline racemase family.

The catalysed reaction is trans-4-hydroxy-L-proline = cis-4-hydroxy-D-proline. In terms of biological role, catalyzes the epimerization of trans-4-hydroxy-L-proline (t4LHyp) to cis-4-hydroxy-D-proline (c4DHyp). Is likely involved in a degradation pathway that converts t4LHyp to alpha-ketoglutarate. Displays no proline racemase activity. This Pseudomonas fluorescens (strain ATCC BAA-477 / NRRL B-23932 / Pf-5) protein is 4-hydroxyproline 2-epimerase.